A 445-amino-acid polypeptide reads, in one-letter code: E3 ubiquitin-protein ligase MYLIP (445 aa).

Residues 1–279 (MLCYVTRPDA…ETHAFYRCDT (279 aa)) form the FERM domain. Fe cation contacts are provided by Cys360, Cys363, and Cys368. An RING-type zinc finger spans residues 387–422 (CMVCCEEEINSTFCPCGHTVCCESCAAQLQSCPVCR). The interval 431–433 (VYL) is critical for homodimerization.

Homodimer. Interacts with the E2 ubiquitin-conjugating enzyme, UBE2D1 (via RING-type zinc finger). Interacts with myosin regulatory light chain (MRLC) and TMEM4. In terms of processing, autoubiquitinated. As to expression, ubiquitously expressed.

The protein resides in the cytoplasm. It localises to the cell membrane. The catalysed reaction is S-ubiquitinyl-[E2 ubiquitin-conjugating enzyme]-L-cysteine + [acceptor protein]-L-lysine = [E2 ubiquitin-conjugating enzyme]-L-cysteine + N(6)-ubiquitinyl-[acceptor protein]-L-lysine.. The protein operates within protein modification; protein ubiquitination. With respect to regulation, can bind 1 iron ion per dimer. Iron binding seems to decrease LDLR degradation activity. Its function is as follows. E3 ubiquitin-protein ligase that mediates ubiquitination and subsequent proteasomal degradation of myosin regulatory light chain (MRLC), LDLR, VLDLR and LRP8. Activity depends on E2 enzymes of the UBE2D family. Proteasomal degradation of MRLC leads to inhibit neurite outgrowth in presence of NGF by counteracting the stabilization of MRLC by saposin-like protein (CNPY2/MSAP) and reducing CNPY2-stimulated neurite outgrowth. Acts as a sterol-dependent inhibitor of cellular cholesterol uptake by mediating ubiquitination and subsequent degradation of LDLR. The polypeptide is E3 ubiquitin-protein ligase MYLIP (MYLIP) (Homo sapiens (Human)).